Consider the following 188-residue polypeptide: UPF0301 protein Smlt1098 (188 aa).

The protein belongs to the UPF0301 (AlgH) family.

This chain is UPF0301 protein Smlt1098, found in Stenotrophomonas maltophilia (strain K279a).